A 479-amino-acid polypeptide reads, in one-letter code: Hydrogenase-4 component D (479 aa).

15 consecutive transmembrane segments (helical) span residues 3-23 (NLALTTLLLPFIGALVVSFSP), 30-50 (WGVLFAALTTLCMLSLISAFY), 55-75 (VAVTLTLVNVGDVALFGLVID), 80-100 (LILFVVVFLGLLVTIYSTGYL), 117-137 (AFLLVFIGAMAGLVLSSTLLG), 168-188 (ALLITHIGSLGLYLAAATLFL), 208-228 (LVYGGILFAAWGKSAQLPMQA), 238-258 (TPISAYLHAASMVKVGVYIFA), 270-290 (VIGGVGMVMALVTILYGFLMY), 300-320 (LAWSTITQLGWMFFGLSLSIF), 330-350 (IAYIVNHAFAKSLFFLVAGAL), 369-389 (LPLPGVGFCVAALAITGVPPF), 390-410 (NGFFSKFPLFAAGFALSVEYW), 411-431 (ILLPAMILLMIESVASFAWFI), and 458-478 (LVLIVLIVMSLISSVIAATWL).

Belongs to the complex I subunit 5 family.

The protein localises to the cell inner membrane. Possible component of hydrogenase 4. In Escherichia coli (strain K12), this protein is Hydrogenase-4 component D.